Reading from the N-terminus, the 595-residue chain is ATPase family AAA domain-containing protein 3 (595 aa).

The tract at residues 1–48 is disordered; it reads MSWLFGVQKNATPQIPDDFQAGAAPGGPQQPGQGQRQEGNSKMAYSFD. Residues 1-243 are Mitochondrial intermembrane-facing; the sequence is MSWLFGVQKN…LNQFLNDKTK (243 aa). Residues 20–35 are compositionally biased toward low complexity; that stretch reads QAGAAPGGPQQPGQGQ. Coiled-coil stretches lie at residues 80–107 and 140–175; these read VTRQKEVENETKKIEAQLANMKSEHIRV and EELAMKARMQEESLRKQEESVKKQEQLRKQTIEHEL. The chain crosses the membrane as a helical span at residues 244-260; that stretch reads IAAAVGGLTALAVGWYT. Topologically, residues 261 to 595 are mitochondrial matrix; the sequence is AKRGTGVTAR…GTTLKRETAV (335 aa). 349–356 provides a ligand contact to ATP; it reads GPPGTGKT. Positions 592 to 595 match the PDZ-binding motif; sequence ETAV.

This sequence belongs to the AAA ATPase family.

The protein resides in the mitochondrion inner membrane. The protein localises to the mitochondrion matrix. Its subcellular location is the mitochondrion nucleoid. Functionally, essential for mitochondrial network organization, mitochondrial metabolism and cell growth at organism and cellular level. Important during development for the up-regulation of mitochondrial activity during the transition to higher larval stages. Regulates mitochondrial iron homeostasis. May play an important role in mitochondrial protein synthesis. May also participate in mitochondrial DNA replication. May bind to mitochondrial DNA D-loops and contribute to nucleoid stability. Plays a role in regulating the production of reactive oxygen species in response to heat stress. This chain is ATPase family AAA domain-containing protein 3, found in Caenorhabditis elegans.